The chain runs to 146 residues: Probable cyclic pyranopterin monophosphate synthase (146 aa).

Residues 66 to 68 (LTH) and 102 to 103 (ME) contribute to the substrate site. Residue aspartate 117 is part of the active site.

This sequence belongs to the MoaC family. Homohexamer; trimer of dimers.

The catalysed reaction is (8S)-3',8-cyclo-7,8-dihydroguanosine 5'-triphosphate = cyclic pyranopterin phosphate + diphosphate. It functions in the pathway cofactor biosynthesis; molybdopterin biosynthesis. Catalyzes the conversion of (8S)-3',8-cyclo-7,8-dihydroguanosine 5'-triphosphate to cyclic pyranopterin monophosphate (cPMP). The protein is Probable cyclic pyranopterin monophosphate synthase of Aeropyrum pernix (strain ATCC 700893 / DSM 11879 / JCM 9820 / NBRC 100138 / K1).